The primary structure comprises 227 residues: PKHD-type hydroxylase A1S_0473 (227 aa).

A Fe2OG dioxygenase domain is found at 78-178 (KIIPPLFNRY…RFASFFWVQS (101 aa)). Residues histidine 96, aspartate 98, and histidine 159 each contribute to the Fe cation site. Arginine 169 contributes to the 2-oxoglutarate binding site.

Requires Fe(2+) as cofactor. L-ascorbate is required as a cofactor.

The protein is PKHD-type hydroxylase A1S_0473 of Acinetobacter baumannii (strain ATCC 17978 / DSM 105126 / CIP 53.77 / LMG 1025 / NCDC KC755 / 5377).